The following is a 203-amino-acid chain: Akirin-2 (203 aa).

2 positions are modified to phosphoserine: Ser18 and Ser21. Positions 22–27 match the Nuclear localization signal motif; the sequence is PKRRRC. Residue Ser57 is modified to Phosphoserine. The tract at residues 115–137 is disordered; that stretch reads PHAFLLSGPASPGTPSGTSSPLK. Low complexity predominate over residues 119–135; it reads LLSGPASPGTPSGTSSP. The short motif at 200-203 is the SYVS motif element; the sequence is SYVS.

The protein belongs to the akirin family. Homodimer. Interacts with IPO9; the interaction is direct. Associates with 20S and 26S proteasomes. Interacts with SMARCD1; promoting SWI/SNF complex recruitment. Interacts with NFKBIZ. Interacts with YWHAB. In terms of processing, polyubiquitinated. Polyubiquitination is dependent of UBR5 that extends pre-ubiquitinated AKIRIN2.

It localises to the nucleus. The protein resides in the cytoplasm. It is found in the membrane. Its function is as follows. Molecular adapter that acts as a bridge between a variety of multiprotein complexes, and which is involved in embryonic development, immunity, myogenesis and brain development. Plays a key role in nuclear protein degradation by promoting import of proteasomes into the nucleus: directly binds to fully assembled 20S proteasomes at one end and to nuclear import receptor IPO9 at the other end, bridging them together and mediating the import of pre-assembled proteasome complexes through the nuclear pore. Involved in innate immunity by regulating the production of interleukin-6 (IL6) downstream of Toll-like receptor (TLR): acts by bridging the NF-kappa-B inhibitor NFKBIZ and the SWI/SNF complex, leading to promote induction of IL6. Also involved in adaptive immunity by promoting B-cell activation. Involved in brain development: required for the survival and proliferation of cerebral cortical progenitor cells. Involved in myogenesis: required for skeletal muscle formation and skeletal development, possibly by regulating expression of muscle differentiation factors. This chain is Akirin-2, found in Bos taurus (Bovine).